Consider the following 157-residue polypeptide: Succinate dehydrogenase assembly factor 2-A, mitochondrial (157 aa).

Residues 1-21 (MLRQVLSSTSVRRLLVSPTRC) constitute a mitochondrion transit peptide.

The protein belongs to the SDHAF2 family. In terms of assembly, interacts with the flavoprotein subunit within the SDH catalytic dimer.

The protein resides in the mitochondrion matrix. Its function is as follows. Plays an essential role in the assembly of succinate dehydrogenase (SDH), an enzyme complex (also referred to as respiratory complex II) that is a component of both the tricarboxylic acid (TCA) cycle and the mitochondrial electron transport chain, and which couples the oxidation of succinate to fumarate with the reduction of ubiquinone (coenzyme Q) to ubiquinol. Required for flavinylation (covalent attachment of FAD) of the flavoprotein subunit of the SDH catalytic dimer. The polypeptide is Succinate dehydrogenase assembly factor 2-A, mitochondrial (Drosophila mojavensis (Fruit fly)).